A 160-amino-acid chain; its full sequence is UPF0225 protein PP_1119 (160 aa).

The protein belongs to the UPF0225 family.

This chain is UPF0225 protein PP_1119, found in Pseudomonas putida (strain ATCC 47054 / DSM 6125 / CFBP 8728 / NCIMB 11950 / KT2440).